Reading from the N-terminus, the 250-residue chain is Ribonuclease HII (250 aa).

In terms of domain architecture, RNase H type-2 spans 66-250; it reads ELVAGVDEVG…TFAPVSDFFK (185 aa). A divalent metal cation contacts are provided by Asp-72, Glu-73, and Asp-164.

This sequence belongs to the RNase HII family. Requires Mn(2+) as cofactor. Mg(2+) serves as cofactor.

The protein resides in the cytoplasm. The enzyme catalyses Endonucleolytic cleavage to 5'-phosphomonoester.. Its function is as follows. Endonuclease that specifically degrades the RNA of RNA-DNA hybrids. The protein is Ribonuclease HII of Lactobacillus helveticus (strain DPC 4571).